The sequence spans 45 residues: Osteocalcin (45 aa).

A Gla domain is found at 1-44; it reads AGTAXGDLTPFQLESLREVCEVNLACEHMADTXGIVAAYTAYYG. Positions 14, 18, 21, and 27 each coordinate Ca(2+). A 4-carboxyglutamate mark is found at Glu14, Glu18, and Glu21. A disulfide bond links Cys20 and Cys26.

The protein belongs to the osteocalcin/matrix Gla protein family. Post-translationally, gamma-carboxyglutamate residues are formed by vitamin K dependent carboxylation by GGCX. These residues are essential for the binding of calcium.

The protein localises to the secreted. Its function is as follows. The carboxylated form is one of the main organic components of the bone matrix, which constitutes 1-2% of the total bone protein. The carboxylated form binds strongly to apatite and calcium. This Danio rerio (Zebrafish) protein is Osteocalcin (bglap).